The following is a 1854-amino-acid chain: Calcium-channel protein cch1 (1854 aa).

The segment covering 1 to 15 (MSSSSNSDPSSSPDN) has biased composition (low complexity). Positions 1 to 33 (MSSSSNSDPSSSPDNTDFIPLKDNPKDTSSYIN) are disordered. N-linked (GlcNAc...) asparagine glycosylation is present at asparagine 40. 3 helical membrane-spanning segments follow: residues 184 to 204 (HPLYNIFIFVVIVLHAVLLMI), 220 to 240 (IIVIGILYTLEMLLKIYLFGF), and 274 to 294 (DFVAIVALWISVIGKKQQGIF). Asparagine 310 is a glycosylation site (N-linked (GlcNAc...) asparagine). Transmembrane regions (helical) follow at residues 328–348 (PLVQVVSFNAFFGVMIAILGV), 427–447 (FFNSLELIFVIMSSNGFTDIM), 461–481 (LFIISAYFLTLWLMSLVIAVV), 514–534 (YLFYSNFIWISFIVAQFVTLC), 549–569 (LIFYACVDFLLAAEVILRFFA), 581–601 (YTNLVDIVLAVLNLVTLLPSI), 606–626 (VAFGWLSIFAIARIYRCILLI), and 642–662 (QLLNLMLFLVIVLFIASLCAV). Asparagine 699 carries an N-linked (GlcNAc...) asparagine glycan. Residues 723-743 (FFTLWFLFSNNVVLSMFIAVI) traverse the membrane as a helical segment. Asparagine 786 carries an N-linked (GlcNAc...) asparagine glycan. The next 3 helical transmembrane spans lie at 946–966 (VFIYACILTAVIIECIATPIY), 980–1000 (FVWTEVAFATIFTIEAAIKII), and 1021–1041 (FFVLVTLWINLYAVLTSHALL). Residue asparagine 1058 is glycosylated (N-linked (GlcNAc...) asparagine). The next 2 helical transmembrane spans lie at 1075 to 1095 (FFKIFSAAVVSATLLIPFALW) and 1148 to 1168 (FPHALLALFEIASIEGWVDIM). Residue asparagine 1184 is glycosylated (N-linked (GlcNAc...) asparagine). 4 consecutive transmembrane segments (helical) span residues 1193–1213 (FVLFNLVSMIYILTLFIAIII), 1274–1294 (FTGLYIVHLLFLLTIFYPCPI), 1302–1322 (SIFLILSICYTINICVKVYGL), and 1331–1351 (FWNMFDVVVTLGSLTCNIAIL). N-linked (GlcNAc...) asparagine glycosylation occurs at asparagine 1356. A run of 3 helical transmembrane segments spans residues 1358-1378 (SLTLLQTTLLVLVTVHLIPKF), 1393-1413 (PSIFSLIATWIVLYITFAIAF), and 1486-1506 (FIAWNIISMYIFVNMFITVVF). Asparagine 1508 and asparagine 1773 each carry an N-linked (GlcNAc...) asparagine glycan. The segment at 1764 to 1792 (TIASGEGDDNHSVEDHLKVPTDNEPRRSP) is disordered. Positions 1771-1790 (DDNHSVEDHLKVPTDNEPRR) are enriched in basic and acidic residues.

This sequence belongs to the calcium channel alpha-1 subunit (TC 1.A.1.11) family. In terms of assembly, interacts with yam8 to form a Ca(2+) influx channel.

The protein resides in the cell membrane. In terms of biological role, voltage-gated, high-affinity calcium channel that functions together with yam8 to mediate calcium entry into cells. Required during conditions of environmental stress. This is Calcium-channel protein cch1 (cch1) from Schizosaccharomyces pombe (strain 972 / ATCC 24843) (Fission yeast).